Here is a 142-residue protein sequence, read N- to C-terminus: Large ribosomal subunit protein uL13 (142 aa).

The protein belongs to the universal ribosomal protein uL13 family. In terms of assembly, part of the 50S ribosomal subunit.

In terms of biological role, this protein is one of the early assembly proteins of the 50S ribosomal subunit, although it is not seen to bind rRNA by itself. It is important during the early stages of 50S assembly. The protein is Large ribosomal subunit protein uL13 of Maridesulfovibrio salexigens (strain ATCC 14822 / DSM 2638 / NCIMB 8403 / VKM B-1763) (Desulfovibrio salexigens).